The chain runs to 558 residues: TNF receptor-associated factor 6 (558 aa).

Residues 72–111 (CPICLMALREAVQTPCGHRFCKACILKSIRDAGHKCPVDN) form an RING-type; degenerate zinc finger. TRAF-type zinc fingers lie at residues 148 to 204 (RHLE…EDKL) and 205 to 261 (NHDQ…NDLA). A coiled-coil region spans residues 321-384 (QNDCTQETRN…NRLGEMESQQ (64 aa)). Positions 386-535 (SGIFIWRINN…NDTLLVRCSV (150 aa)) constitute an MATH domain.

This sequence belongs to the TNF receptor-associated factor family. A subfamily. As to quaternary structure, homotrimer. Homooligomer.

It localises to the cytoplasm. The protein localises to the cell cortex. The protein resides in the nucleus. It is found in the lipid droplet. It catalyses the reaction S-ubiquitinyl-[E2 ubiquitin-conjugating enzyme]-L-cysteine + [acceptor protein]-L-lysine = [E2 ubiquitin-conjugating enzyme]-L-cysteine + N(6)-ubiquitinyl-[acceptor protein]-L-lysine.. It functions in the pathway protein modification; protein ubiquitination. Functionally, E3 ubiquitin ligase that, together with UBE2N and UBE2V1, mediates the synthesis of 'Lys-63'-linked-polyubiquitin chains conjugated to proteins, such as IKBKG, IRAK1, AKT1 and AKT2. Also mediates ubiquitination of free/unanchored polyubiquitin chain that leads to MAP3K7 activation. The sequence is that of TNF receptor-associated factor 6 (traf6) from Xenopus tropicalis (Western clawed frog).